Reading from the N-terminus, the 301-residue chain is uncharacterized protein (301 aa).

This sequence belongs to the asfivirus E301R family. In terms of assembly, interacts with host IRF3.

Plays a role in the inhibition of host innate immune system by acting as a negatively regulator of type I interferon production. Mechanistically, interacts with and prevents host IRF3 nuclear localization to inhibit its transcriptional activity. This is an uncharacterized protein from African swine fever virus (isolate Tick/South Africa/Pretoriuskop Pr4/1996) (ASFV).